The sequence spans 339 residues: MEQAALKSSVRKEMALKTTSPVYEEFLAVTTAQNGFSVDDFSVDDLLDLSNDDVFADEETDLKAQHEMVRVSSEEPNDDGDALRRSSDFSGCDDFGSLPTSELSLPADDLANLEWLSHFVEDSFTEYSGPNLTGTPTEKPAWLTGDRKHPVTAVTEETCFKSPVPAKARSKRNRNGLKVWSLGSSSSSGPSSSGSTSSSSSGPSSPWFSGAELLEPVVTSERPPFPKKHKKRSAESVFSGELQQLQPQRKCSHCGVQKTPQWRAGPMGAKTLCNACGVRYKSGRLLPEYRPACSPTFSSELHSNHHRKVIEMRRKKEPTSDNETGLNQLVQSPQAVPSF.

Disordered stretches follow at residues Met-68–Asp-88, Glu-126–Gly-145, Pro-163–Pro-206, and Glu-221–Leu-242. Residues Glu-126–Pro-136 are compositionally biased toward polar residues. Positions Lys-167–Arg-174 match the Nuclear localization signal motif. Positions Ser-181–Pro-206 are enriched in low complexity. Residues Leu-245–Ser-299 form a GATA-type zinc finger. The tract at residues Arg-314–Phe-339 is disordered. Residues Asp-321–Phe-339 are compositionally biased toward polar residues.

Belongs to the type IV zinc-finger family. Class A subfamily.

Its subcellular location is the nucleus. In terms of biological role, transcriptional activator that specifically binds 5'-GATA-3' or 5'-GAT-3' motifs within gene promoters. May be involved in the regulation of some light-responsive genes. This chain is GATA transcription factor 5 (GATA5), found in Arabidopsis thaliana (Mouse-ear cress).